The sequence spans 244 residues: Probable metallo-hydrolase YhfI (244 aa).

The Zn(2+) site is built by His59, His61, Asp63, His64, His134, Asp155, and His211.

This sequence belongs to the metallo-beta-lactamase superfamily. Zn(2+) is required as a cofactor.

The polypeptide is Probable metallo-hydrolase YhfI (yhfI) (Bacillus subtilis (strain 168)).